We begin with the raw amino-acid sequence, 62 residues long: Large ribosomal subunit protein eL37 (62 aa).

Positions 20, 23, 35, and 38 each coordinate Zn(2+). A C4-type zinc finger spans residues 20–38; the sequence is CRRCGRRSYHVRKKACSAC.

This sequence belongs to the eukaryotic ribosomal protein eL37 family. Zn(2+) is required as a cofactor.

Functionally, binds to the 23S rRNA. The sequence is that of Large ribosomal subunit protein eL37 from Methanococcus aeolicus (strain ATCC BAA-1280 / DSM 17508 / OCM 812 / Nankai-3).